The chain runs to 283 residues: Non-selective voltage-gated ion channel VDAC1 (283 aa).

An N-acetylalanine modification is found at Ala2. Lys12 lines the ATP pocket. Lys12 participates in a covalent cross-link: Glycyl lysine isopeptide (Lys-Gly) (interchain with G-Cter in ubiquitin). A Phosphoserine modification is found at Ser13. A Phosphothreonine modification is found at Thr19. Position 20 (Lys20) interacts with ATP. At Lys20 the chain carries N6-acetyllysine; alternate. Lys20 is modified (N6-succinyllysine; alternate). Residue Lys20 forms a Glycyl lysine isopeptide (Lys-Gly) (interchain with G-Cter in ubiquitin); alternate linkage. A run of 2 beta stranded transmembrane segments spans residues 26-35 and 39-47; these read LIKLDLKTKS and LEFTSSGSA. Residues Lys53 and Lys61 each participate in a glycyl lysine isopeptide (Lys-Gly) (interchain with G-Cter in ubiquitin) cross-link. A beta stranded transmembrane segment spans residues 54–64; sequence VTGSLETKYRW. Tyr67 bears the Phosphotyrosine mark. A run of 3 beta stranded transmembrane segments spans residues 69–76, 80–89, and 95–104; these read LTFTEKWN, TLGTEITVED, and LKLTFDSSFS. Thr107 bears the Phosphothreonine mark. N6-acetyllysine; alternate is present on Lys109. Lys109 is covalently cross-linked (Glycyl lysine isopeptide (Lys-Gly) (interchain with G-Cter in ubiquitin); alternate). Lys110 participates in a covalent cross-link: Glycyl lysine isopeptide (Lys-Gly) (interchain with G-Cter in ubiquitin). The next 4 membrane-spanning stretches (beta stranded) occupy residues 111–120, 123–130, 137–145, and 150–158; these read NAKIKTGYKR, VNLGCDVD, SIRGALVLG, and LAGYQMNFE. Lys161 is covalently cross-linked (Glycyl lysine isopeptide (Lys-Gly) (interchain with G-Cter in ubiquitin)). 6 consecutive transmembrane segments (beta stranded) span residues 163 to 175, 178 to 185, 189 to 198, 202 to 211, 218 to 227, and 231 to 238; these read RVTQ…GYKT, FQLHTNVN, EFGGSIYQKV, LETAVNLAWT, RFGIAAKYQI, and ACFSAKVN. At Ser193 the chain carries Phosphoserine; by NEK1. The residue at position 240 (Ser240) is a Phosphoserine. Residue 242 to 244 participates in NAD(+) binding; it reads LIG. The chain crosses the membrane as a beta stranded span at residues 242 to 251; the sequence is LIGLGYTQTL. The residue at position 252 (Lys252) is an N6-acetyllysine. The chain crosses the membrane as a beta stranded span at residues 254–263; it reads GIKLTLSALL. Residue 260 to 264 participates in NAD(+) binding; sequence SALLD. Lys266 carries the N6-acetyllysine; alternate modification. Lys266 is covalently cross-linked (Glycyl lysine isopeptide (Lys-Gly) (interchain with G-Cter in ubiquitin); alternate). The beta stranded transmembrane segment at 273–282 threads the bilayer; the sequence is HKLGLGLEFQ. Residue Lys274 forms a Glycyl lysine isopeptide (Lys-Gly) (interchain with G-Cter in ubiquitin) linkage.

It belongs to the eukaryotic mitochondrial porin family. As to quaternary structure, homodimer and homotrimer; in response to cyclic AMP or calcium; oligomerization is required for scramblase activity. Component of the mitochondrial permeability transition pore complex (mPTPC), at least composed of SPG7, VDAC1 and PPIF. Interacts with SPG7, NIPSNAP2 and SLC25A30. Interacts with hexokinases including HK1. The HK1-VDAC1 complex interacts with ATF2. Interacts with BCL2L1. Interacts with BAK1. Interacts with RTL10/BOP (via BH3 domain). Interacts with amyloid-beta and APP; induces VDAC1 dephosphorylation. Interacts with TMEM41B. Interacts with BCAP31. Interacts with HSPA9; this interaction couples ITPR1 to VDAC1. Phosphorylation at Ser-193 by NEK1 promotes the closed conformational state preventing excessive mitochondrial membrane permeability and subsequent apoptotic cell death after injury. Phosphorylation by the AKT-GSK3B axis stabilizes the protein probably by preventing ubiquitin-mediated proteasomal degradation. In terms of processing, ubiquitinated. Undergoes monoubiquitination and polyubiquitination by PRKN; monoubiquitination at Lys-274 inhibits apoptosis, whereas polyubiquitination leads to its degradation and promotes mitophagy. Deubiquitinated by USP30.

It localises to the mitochondrion outer membrane. Its subcellular location is the cell membrane. The protein localises to the membrane raft. The enzyme catalyses chloride(in) = chloride(out). It catalyses the reaction K(+)(in) = K(+)(out). The catalysed reaction is ATP(in) = ATP(out). It carries out the reaction Ca(2+)(in) = Ca(2+)(out). The enzyme catalyses Na(+)(in) = Na(+)(out). It catalyses the reaction Mg(2+)(in) = Mg(2+)(out). The catalysed reaction is L-glutamate(out) = L-glutamate(in). It carries out the reaction dopamine(out) = dopamine(in). The enzyme catalyses acetylcholine(in) = acetylcholine(out). It catalyses the reaction Fe(III)-[cytochrome c](out) = Fe(III)-[cytochrome c](in). The catalysed reaction is a 1,2-diacyl-sn-glycero-3-phosphocholine(in) = a 1,2-diacyl-sn-glycero-3-phosphocholine(out). It carries out the reaction a 1,2-diacyl-sn-glycero-3-phospho-L-serine(in) = a 1,2-diacyl-sn-glycero-3-phospho-L-serine(out). With respect to regulation, inhibited by nitric oxide. In terms of biological role, non-selective voltage-gated ion channel that mediates the transport of anions and cations through the mitochondrion outer membrane and plasma membrane. The channel at the outer mitochondrial membrane allows diffusion of small hydrophilic molecules; in the plasma membrane it is involved in cell volume regulation and apoptosis. It adopts an open conformation at low or zero membrane potential and a closed conformation at potentials above 30-40 mV. The open state has a weak anion selectivity whereas the closed state is cation-selective. Binds various signaling molecules, including the sphingolipid ceramide, the phospholipid phosphatidylcholine, and the sterols cholesterol and oxysterol. In depolarized mitochondria, acts downstream of PRKN and PINK1 to promote mitophagy or prevent apoptosis; polyubiquitination by PRKN promotes mitophagy, while monoubiquitination by PRKN decreases mitochondrial calcium influx which ultimately inhibits apoptosis. May participate in the formation of the permeability transition pore complex (PTPC) responsible for the release of mitochondrial products that triggers apoptosis. May mediate ATP export from cells. Part of a complex composed of HSPA9, ITPR1 and VDAC1 that regulates mitochondrial calcium-dependent apoptosis by facilitating calcium transport from the ER lumen to the mitochondria intermembrane space thus providing calcium for the downstream calcium channel MCU that directly releases it into mitochondria matrix. Mediates cytochrome c efflux. Catalyzes the scrambling of phospholipids across the outer mitochondrial membrane; the mechanism is unrelated to channel activity and is capable of translocating both anionic and zwitterionic phospholipids. The protein is Non-selective voltage-gated ion channel VDAC1 of Sus scrofa (Pig).